A 568-amino-acid chain; its full sequence is Delta 8-(E)-sphingolipid desaturase (568 aa).

Residues 2–77 (DNIISRGEIE…FRKWRIGRID (76 aa)) enclose the Cytochrome b5 heme-binding domain. His-37 and His-60 together coordinate heme. 2 helical membrane passes run 241 to 261 (FWSA…AHDA) and 272 to 292 (LDNI…LGWW). Residues 259 to 263 (HDAGH) carry the Histidine box-1 motif. Positions 296 to 300 (HNVHH) match the Histidine box-2 motif. Transmembrane regions (helical) follow at residues 352–377 (YLYY…LLGL), 389–409 (YFEL…LVGC), and 421–441 (IMVS…SHFA). A Histidine box-3 motif is present at residues 480–484 (QVVHH). A compositionally biased stretch (basic and acidic residues) spans 549-560 (ATGEREADEKTY). The interval 549–568 (ATGEREADEKTYRTKSIKNA) is disordered.

Belongs to the fatty acid desaturase type 1 family.

The protein resides in the membrane. The enzyme catalyses an N-acylsphing-4-enine + 2 Fe(II)-[cytochrome b5] + O2 + 2 H(+) = a (4E,8E)-4-sphinga-4,8-dienine ceramide + 2 Fe(III)-[cytochrome b5] + 2 H2O. It functions in the pathway lipid metabolism; sphingolipid metabolism. In terms of biological role, delta(8)-fatty-acid desaturase which introduces a double bond at the 8-position in the long-chain base (LCB) of ceramides. Required for the formation of the di-unsaturated sphingoid base (E,E)-sphinga-4,8-dienine during glucosylceramide (GluCer) biosynthesis. The chain is Delta 8-(E)-sphingolipid desaturase from Lachancea kluyveri (strain ATCC 58438 / CBS 3082 / BCRC 21498 / NBRC 1685 / JCM 7257 / NCYC 543 / NRRL Y-12651) (Yeast).